The following is a 147-amino-acid chain: Transthyretin (147 aa).

Residues 1-20 (MASHRLLLLCLAGLVFVSEA) form the signal peptide. Residue C30 is modified to Sulfocysteine. K35 lines the L-thyroxine pocket. 4-carboxyglutamate is present on E62. S72 is modified (phosphoserine). Residue E74 coordinates L-thyroxine. N-linked (GlcNAc...) asparagine glycosylation is present at N118. Position 137 (S137) interacts with L-thyroxine.

It belongs to the transthyretin family. In terms of assembly, homotetramer. Dimer of dimers. In the homotetramer, subunits assemble around a central channel that can accommodate two ligand molecules. Interacts with RBP4. Post-translationally, sulfonation of the reactive cysteine Cys-30 enhances the stability of the native conformation of TTR, avoiding misassembly of the protein leading to amyloid formation. As to expression, detected in liver.

The protein localises to the secreted. Thyroid hormone-binding protein. Probably transports thyroxine from the bloodstream to the brain. In Pongo abelii (Sumatran orangutan), this protein is Transthyretin (TTR).